Here is a 207-residue protein sequence, read N- to C-terminus: Carbonic anhydrase 2 (207 aa).

Residues cysteine 51, aspartate 53, histidine 104, and cysteine 107 each contribute to the Zn(2+) site.

Belongs to the beta-class carbonic anhydrase family. Zn(2+) serves as cofactor.

It catalyses the reaction hydrogencarbonate + H(+) = CO2 + H2O. Functionally, catalyzes the reversible hydration of carbon dioxide to form bicarbonate. This Mycobacterium tuberculosis (strain CDC 1551 / Oshkosh) protein is Carbonic anhydrase 2 (mtcA2).